Reading from the N-terminus, the 156-residue chain is Protein archease-like (156 aa).

Ca(2+) contacts are provided by D25, D155, and I156.

Belongs to the archease family.

Its function is as follows. Component of the tRNA-splicing ligase complex required to facilitate the enzymatic turnover of catalytic subunit RtcB. Plays an important role in a RNA repair and splicing pathway which controls axon regeneration in response to peripheral (PNS) and central nervous system (CNS) injury, by activating splicing of Xbp1 to promote axon regeneration in response to axotomy. This Drosophila melanogaster (Fruit fly) protein is Protein archease-like.